The chain runs to 175 residues: ATP-dependent protease subunit HslV (175 aa).

T2 is a catalytic residue. Na(+) contacts are provided by A156, C159, and T162.

Belongs to the peptidase T1B family. HslV subfamily. As to quaternary structure, a double ring-shaped homohexamer of HslV is capped on each side by a ring-shaped HslU homohexamer. The assembly of the HslU/HslV complex is dependent on binding of ATP.

It localises to the cytoplasm. It carries out the reaction ATP-dependent cleavage of peptide bonds with broad specificity.. Its activity is regulated as follows. Allosterically activated by HslU binding. Functionally, protease subunit of a proteasome-like degradation complex believed to be a general protein degrading machinery. This is ATP-dependent protease subunit HslV from Rhizobium rhizogenes (strain K84 / ATCC BAA-868) (Agrobacterium radiobacter).